We begin with the raw amino-acid sequence, 662 residues long: Neurexin-2-beta (662 aa).

A compositionally biased stretch (gly residues) spans 1–10 (MPPGGSGQGG). The disordered stretch occupies residues 1–27 (MPPGGSGQGGCPRRPPALAGPLPPPPP). Residues 1–46 (MPPGGSGQGGCPRRPPALAGPLPPPPPPPPLPLLLGLLLLLGAAEG) form the signal peptide. The Extracellular segment spans residues 47–586 (ARVSSSLSTT…EVIRESSSTT (540 aa)). A Laminin G-like domain is found at 87–295 (TTYIFGKGGA…HLRLVGEGPS (209 aa)). Residues Asp139 and Val156 each contribute to the Ca(2+) site. The N-linked (GlcNAc...) asparagine glycan is linked to Asn186. Residues Ile238 and Asn240 each contribute to the Ca(2+) site. O-linked (Xyl...) (heparan sulfate) serine glycosylation occurs at Ser350. Disordered regions lie at residues 408–458 (ATQD…LPPT), 476–496 (LLSPRKPAPRPNLRTDGATGA), and 530–557 (LGPGVPTAFEPRRPPPLRPGVTSVPGFP). The chain crosses the membrane as a helical span at residues 587-607 (GMVVGIVAAAALCILILLYAM). Residues 608-662 (YKYRNRDEGSYQVDQSRNYISNSAQSNGAVVKEKAPAAPKTPSKAKKNKDKEYYV) lie on the Cytoplasmic side of the membrane. Residues 629–662 (NSAQSNGAVVKEKAPAAPKTPSKAKKNKDKEYYV) form a disordered region.

The protein belongs to the neurexin family. In terms of assembly, interacts (via cytoplasmic C-terminal region) with CASK. Isoform Beta 4b binds alpha-dystroglycan and neuroligins NLGN1, NLGN2 and NLGN3. Interacts with CBLN1, CBLN2 and, less avidly, with CBLN4. Interacts with CLSTN3. Post-translationally, O-glycosylated; contains heparan sulfate. Heparan sulfate attachment is required for synapse development by mediating interactions with neuroligins. As to expression, brain (neuronal synapse).

It is found in the presynaptic cell membrane. Neuronal cell surface protein that may be involved in cell recognition and cell adhesion. The sequence is that of Neurexin-2-beta (Nrxn2) from Rattus norvegicus (Rat).